The primary structure comprises 534 residues: Fimbrial subunit type 2 (534 aa).

An N-terminal signal peptide occupies residues 1 to 32 (MKYNTSTLGRRAAAAAGVLTLAVLGLAPMAQA). 2 disordered regions span residues 56-76 (GDGN…GKGA) and 329-376 (TYAE…DKDG). Residues 334–347 (PPAPETPPANPDNP) show a composition bias toward pro residues. A compositionally biased stretch (basic and acidic residues) spans 361–376 (TIKKVDGNDRSGDKDG). Positions 492 to 496 (LPLTG) match the LPXTG sorting signal motif. Pentaglycyl murein peptidoglycan amidated threonine is present on Thr495. Positions 496–534 (GANGMLILTASGAALLMIAVGSVLVARYRERKRNRDLAA) are cleaved as a propeptide — removed by sortase.

It localises to the secreted. The protein resides in the cell wall. It is found in the fimbrium. Major fimbrial subunit of A.naeslundii. This Actinomyces naeslundii protein is Fimbrial subunit type 2.